The chain runs to 123 residues: Putative iron-sulfur cluster insertion protein ErpA (123 aa).

Cys51, Cys115, and Cys117 together coordinate iron-sulfur cluster.

It belongs to the HesB/IscA family. As to quaternary structure, homodimer. The cofactor is iron-sulfur cluster.

Required for insertion of 4Fe-4S clusters. This chain is Putative iron-sulfur cluster insertion protein ErpA, found in Bordetella bronchiseptica (strain ATCC BAA-588 / NCTC 13252 / RB50) (Alcaligenes bronchisepticus).